The sequence spans 1216 residues: Coatomer subunit alpha-1 (1216 aa).

8 WD repeats span residues Thr-7–Asp-48, Glu-49–Thr-88, Gly-91–Thr-132, Gly-133–Val-172, Gly-202–Val-241, Gly-246–Thr-285, Arg-288–Ala-326, and Ser-363–Ser-404.

In terms of assembly, oligomeric complex that consists of at least the alpha, beta, beta', gamma, delta, epsilon and zeta subunits.

The protein resides in the cytoplasm. Its subcellular location is the golgi apparatus membrane. The protein localises to the cytoplasmic vesicle. It is found in the COPI-coated vesicle membrane. The coatomer is a cytosolic protein complex that binds to dilysine motifs and reversibly associates with Golgi non-clathrin-coated vesicles, which further mediate biosynthetic protein transport from the ER, via the Golgi up to the trans Golgi network. Coatomer complex is required for budding from Golgi membranes, and is essential for the retrograde Golgi-to-ER transport of dilysine-tagged proteins. In Arabidopsis thaliana (Mouse-ear cress), this protein is Coatomer subunit alpha-1.